A 153-amino-acid chain; its full sequence is Ribosomal RNA large subunit methyltransferase H (153 aa).

S-adenosyl-L-methionine is bound by residues Leu70, Gly102, and 121-126 (LSRMTF).

This sequence belongs to the RNA methyltransferase RlmH family. As to quaternary structure, homodimer.

It is found in the cytoplasm. The enzyme catalyses pseudouridine(1915) in 23S rRNA + S-adenosyl-L-methionine = N(3)-methylpseudouridine(1915) in 23S rRNA + S-adenosyl-L-homocysteine + H(+). Functionally, specifically methylates the pseudouridine at position 1915 (m3Psi1915) in 23S rRNA. The polypeptide is Ribosomal RNA large subunit methyltransferase H (Geobacter sulfurreducens (strain ATCC 51573 / DSM 12127 / PCA)).